The chain runs to 93 residues: UPF0223 protein gbs1030 (93 aa).

This sequence belongs to the UPF0223 family.

This Streptococcus agalactiae serotype III (strain NEM316) protein is UPF0223 protein gbs1030.